The sequence spans 147 residues: MALRACGLIIFRRRLIPKVDNTAIEFLLLQASNGIHHWTPPKGHVEPGESDLQTALRETQEEAGIDAGQLTIIEGFRKELNYVAWEKPKTVIYWLAEVKDYDVEVRLSREHQAYRWLGLDEACQLAQFKDMKAVLQEGHQFLCSMAA.

Residue Ala2 is modified to N-acetylalanine. Positions 2–139 constitute a Nudix hydrolase domain; that stretch reads ALRACGLIIF…DMKAVLQEGH (138 aa). The Nudix box signature appears at 43–64; it reads GHVEPGESDLQTALRETQEEAG.

It belongs to the Nudix hydrolase family. A divalent metal cation is required as a cofactor.

The enzyme catalyses P(1),P(4)-bis(5'-guanosyl) tetraphosphate + H2O = GMP + GTP + 2 H(+). It carries out the reaction a 5'-end CoA-ribonucleoside in mRNA + H2O = a 5'-end phospho-adenosine-phospho-ribonucleoside in mRNA + (R)-4'-phosphopantetheine + 2 H(+). It catalyses the reaction a 5'-end FAD-phospho-ribonucleoside in mRNA + H2O = a 5'-end phospho-adenosine-phospho-ribonucleoside in mRNA + FMN + 2 H(+). Inhibited by fluoride ions. In terms of biological role, catalyzes the asymmetric hydrolysis of diadenosine 5',5'''-P1,P4-tetraphosphate (Ap4A) to yield AMP and ATP. Exhibits decapping activity towards FAD-capped RNAs and dpCoA-capped RNAs in vitro. The polypeptide is Bis(5'-nucleosyl)-tetraphosphatase [asymmetrical] (NUDT2) (Sus scrofa (Pig)).